Reading from the N-terminus, the 46-residue chain is Cystatin WCPI-3 (46 aa).

The Secondary area of contact signature appears at 35–38 (VVAG).

Belongs to the cystatin family. Phytocystatin subfamily.

Inhibitor of papain. The polypeptide is Cystatin WCPI-3 (Wisteria floribunda (Japanese wisteria)).